The chain runs to 207 residues: Large ribosomal subunit protein uL4 (207 aa).

The interval 49–77 (HAVKNRSAVRGGGKKPWRQKGTGRARQGS) is disordered. Over residues 60–71 (GGKKPWRQKGTG) the composition is skewed to basic residues.

The protein belongs to the universal ribosomal protein uL4 family. Part of the 50S ribosomal subunit.

Functionally, one of the primary rRNA binding proteins, this protein initially binds near the 5'-end of the 23S rRNA. It is important during the early stages of 50S assembly. It makes multiple contacts with different domains of the 23S rRNA in the assembled 50S subunit and ribosome. Forms part of the polypeptide exit tunnel. The sequence is that of Large ribosomal subunit protein uL4 from Levilactobacillus brevis (strain ATCC 367 / BCRC 12310 / CIP 105137 / JCM 1170 / LMG 11437 / NCIMB 947 / NCTC 947) (Lactobacillus brevis).